We begin with the raw amino-acid sequence, 216 residues long: Eukaryotic translation initiation factor isoform 4E-2 (216 aa).

Residues 1 to 23 form a disordered region; the sequence is MAEVEAPATAVEAPAAAVATTTP. Cys113 and Cys152 are oxidised to a cystine.

Belongs to the eukaryotic initiation factor 4E family. EIF4F is a multi-subunit complex, the composition of which varies with external and internal environmental conditions. It is composed of at least EIF4A, EIF4E and EIF4G. EIF4E is also known to interact with other partners. In higher plants two isoforms of EIF4F have been identified, named isoform EIF4F and isoform EIF(iso)4F. Isoform EIF4F has subunits p220 and p26, whereas isoform EIF(iso)4F has subunits p82 and p28. According to the redox status, the Cys-113-Cys-152 disulfide bridge may have a role in regulating protein function by affecting its ability to bind capped mRNA.

Its function is as follows. Recognizes and binds the 7-methylguanosine-containing mRNA cap during an early step in the initiation of protein synthesis and facilitates ribosome binding by inducing the unwinding of the mRNAs secondary structures. This chain is Eukaryotic translation initiation factor isoform 4E-2, found in Zea mays (Maize).